The sequence spans 119 residues: Bombesin (119 aa).

The signal sequence occupies residues 1-29; it reads MSAIPLNRILPLGFLFHLLIFSFISLSSC. Residues 30–44 constitute a propeptide that is removed on maturation; that stretch reads MEFVEDPNNQGRISL. A Methionine amide modification is found at Met58. Residues 62–119 constitute a propeptide that is removed on maturation; that stretch reads SLQDTDFEEMESFAKRNVENMRAALLQEQNRAESERELRHAQLVVRNILEQYLKNMQN.

The protein belongs to the bombesin/neuromedin-B/ranatensin family. As to expression, localized to the cutaneous granular glands in the skin and the brain.

It is found in the secreted. Stimulates smooth muscle contraction. Role in induction of hypothermia, stimulation of DNA replication and release of many gastrointestinal hormones. The polypeptide is Bombesin (Bombina orientalis (Oriental fire-bellied toad)).